A 677-amino-acid chain; its full sequence is UPF0313 protein RPA0679 (677 aa).

Residues 335 to 601 (AWDMIKTSVT…VEAIKGLRQR (267 aa)) form the Radical SAM core domain. Residues cysteine 349, cysteine 353, and cysteine 356 each coordinate [4Fe-4S] cluster. The tract at residues 635 to 677 (RPDQLVPAHQPPGTGKAAGTRRPVRGDGPKPQRFTTKGVRLVK) is disordered.

The protein belongs to the UPF0313 family. [4Fe-4S] cluster is required as a cofactor.

The polypeptide is UPF0313 protein RPA0679 (Rhodopseudomonas palustris (strain ATCC BAA-98 / CGA009)).